We begin with the raw amino-acid sequence, 423 residues long: Enolase (423 aa).

Q166 lines the (2R)-2-phosphoglycerate pocket. E208 acts as the Proton donor in catalysis. Positions 242, 283, and 310 each coordinate Mg(2+). Residues K335, R364, S365, and K386 each coordinate (2R)-2-phosphoglycerate. Catalysis depends on K335, which acts as the Proton acceptor.

Belongs to the enolase family. It depends on Mg(2+) as a cofactor.

The protein resides in the cytoplasm. The protein localises to the secreted. Its subcellular location is the cell surface. It catalyses the reaction (2R)-2-phosphoglycerate = phosphoenolpyruvate + H2O. It participates in carbohydrate degradation; glycolysis; pyruvate from D-glyceraldehyde 3-phosphate: step 4/5. Functionally, catalyzes the reversible conversion of 2-phosphoglycerate (2-PG) into phosphoenolpyruvate (PEP). It is essential for the degradation of carbohydrates via glycolysis. This Elusimicrobium minutum (strain Pei191) protein is Enolase.